The primary structure comprises 213 residues: Protein PAE0745 (213 aa).

An AMMECR1 domain is found at 8-201; it reads EEGTFLVRLA…EKSPGGEVYE (194 aa).

The protein is Protein PAE0745 of Pyrobaculum aerophilum (strain ATCC 51768 / DSM 7523 / JCM 9630 / CIP 104966 / NBRC 100827 / IM2).